Here is a 423-residue protein sequence, read N- to C-terminus: Putative transmembrane protein ORF103 (423 aa).

Basic and acidic residues predominate over residues Glu-43 to Val-57. The segment at Glu-43–Arg-91 is disordered. A compositionally biased stretch (acidic residues) spans Lys-67–Glu-84. A run of 2 helical transmembrane segments spans residues Ile-125–Leu-145 and Phe-162–Ile-182. The tract at residues Asp-253–Lys-282 is disordered. 2 helical membrane-spanning segments follow: residues Leu-326–Ser-346 and Ile-366–Leu-386.

The protein localises to the host membrane. This is Putative transmembrane protein ORF103 from Magallana gigas (Pacific oyster).